A 1010-amino-acid chain; its full sequence is Retinoblastoma-related protein 1 (1010 aa).

The segment at 1–23 (MEGAAPPASSGSEVTGAGSGKVD) is disordered. A domain A region spans residues 419-619 (TPVSTAMTTA…EKGSSMYNSL (201 aa)). Residues 419-861 (TPVSTAMTTA…NEVFIPTVKP (443 aa)) form a pocket region. The tract at residues 620-730 (IVARPTLSAE…PAAGGELCAE (111 aa)) is spacer. The tract at residues 657 to 679 (LPPLPFQKQEHSPDKDEVRSPKR) is disordered. Basic and acidic residues predominate over residues 664–679 (KQEHSPDKDEVRSPKR). Residues 731–861 (TGIGVFLSKI…NEVFIPTVKP (131 aa)) form a domain B region. Residues 868–898 (SGTSPNKKNEEKCAADGPYPESPRLSRFPNL) form a disordered region.

This sequence belongs to the retinoblastoma protein (RB) family.

The protein localises to the nucleus. In terms of biological role, regulator of biological processes that recruits a histone deacetylase to control gene transcription. May play a role in the entry into mitosis, negatively regulating the cell proliferation. Formation of stable complexes with geminiviridae replication-associated proteins may create a cellular environment which favors viral DNA replication. In Oryza sativa subsp. japonica (Rice), this protein is Retinoblastoma-related protein 1 (RBR1).